Reading from the N-terminus, the 341-residue chain is Ribonucleoside-diphosphate reductase small chain A (341 aa).

The segment at 1-20 is disordered; that stretch reads MGSLKEGQGRDMEEGESEEP. Asp87, Glu118, and His121 together coordinate Fe cation. The active site involves Tyr125. 3 residues coordinate Fe cation: Glu180, Glu214, and His217.

It belongs to the ribonucleoside diphosphate reductase small chain family. As to quaternary structure, homodimer and heterodimer with TSO2. Heterotetramer of two R1 and two R2 chains. A radical transfer pathway may occur between Tyr-125 of protein R2 and R1. Homodimer contains a dinuclear non-heme iron center and a stable tyrosyl radical essential for activity. A transfer pathway may occur between Tyr-125 of protein R2 and R1. Interacts with CSN7. The cofactor is Fe cation. In terms of tissue distribution, expressed in rosette leaves, cauline leaves, stems and flowers.

Its subcellular location is the cytoplasm. It carries out the reaction a 2'-deoxyribonucleoside 5'-diphosphate + [thioredoxin]-disulfide + H2O = a ribonucleoside 5'-diphosphate + [thioredoxin]-dithiol. With respect to regulation, inhibited by phenol, paracetamol, 2,4,6-trimethylphenol, resveratrol, furfuryl mercaptan, 2-thiophenthiol, phenylhydrazine, and hydroxyurea. Provides the precursors necessary for DNA synthesis. Catalyzes the biosynthesis of deoxyribonucleotides from the corresponding ribonucleotides. The polypeptide is Ribonucleoside-diphosphate reductase small chain A (RNR2A) (Arabidopsis thaliana (Mouse-ear cress)).